Here is a 301-residue protein sequence, read N- to C-terminus: DNA repair protein RecO (301 aa).

The tract at residues 272–301 is disordered; that stretch reads PTPSGQGSPVAAAAFSEEDSETLGSNLKKL.

The protein belongs to the RecO family.

In terms of biological role, involved in DNA repair and RecF pathway recombination. The chain is DNA repair protein RecO from Synechococcus sp. (strain JA-3-3Ab) (Cyanobacteria bacterium Yellowstone A-Prime).